The chain runs to 126 residues: Small ribosomal subunit protein uS13 (126 aa).

Positions 93–126 are disordered; it reads RRGLPVRGQRTKTNARTRKGPKRTVAGKKKAGRK.

This sequence belongs to the universal ribosomal protein uS13 family. In terms of assembly, part of the 30S ribosomal subunit. Forms a loose heterodimer with protein S19. Forms two bridges to the 50S subunit in the 70S ribosome.

Located at the top of the head of the 30S subunit, it contacts several helices of the 16S rRNA. In the 70S ribosome it contacts the 23S rRNA (bridge B1a) and protein L5 of the 50S subunit (bridge B1b), connecting the 2 subunits; these bridges are implicated in subunit movement. Contacts the tRNAs in the A and P-sites. The chain is Small ribosomal subunit protein uS13 from Beutenbergia cavernae (strain ATCC BAA-8 / DSM 12333 / CCUG 43141 / JCM 11478 / NBRC 16432 / NCIMB 13614 / HKI 0122).